Reading from the N-terminus, the 102-residue chain is ATP-dependent Clp protease adapter protein ClpS (102 aa).

This sequence belongs to the ClpS family. Binds to the N-terminal domain of the chaperone ClpA.

Functionally, involved in the modulation of the specificity of the ClpAP-mediated ATP-dependent protein degradation. The chain is ATP-dependent Clp protease adapter protein ClpS from Shewanella frigidimarina (strain NCIMB 400).